The chain runs to 616 residues: 1-deoxy-D-xylulose-5-phosphate synthase (616 aa).

Thiamine diphosphate contacts are provided by residues His-74 and 115-117; that span reads GHS. Mg(2+) is bound at residue Asp-146. Thiamine diphosphate-binding positions include 147–148, Asn-175, Tyr-282, and Glu-365; that span reads GA. A Mg(2+)-binding site is contributed by Asn-175.

This sequence belongs to the transketolase family. DXPS subfamily. As to quaternary structure, homodimer. Mg(2+) is required as a cofactor. Requires thiamine diphosphate as cofactor.

It catalyses the reaction D-glyceraldehyde 3-phosphate + pyruvate + H(+) = 1-deoxy-D-xylulose 5-phosphate + CO2. It functions in the pathway metabolic intermediate biosynthesis; 1-deoxy-D-xylulose 5-phosphate biosynthesis; 1-deoxy-D-xylulose 5-phosphate from D-glyceraldehyde 3-phosphate and pyruvate: step 1/1. In terms of biological role, catalyzes the acyloin condensation reaction between C atoms 2 and 3 of pyruvate and glyceraldehyde 3-phosphate to yield 1-deoxy-D-xylulose-5-phosphate (DXP). The protein is 1-deoxy-D-xylulose-5-phosphate synthase of Chromobacterium violaceum (strain ATCC 12472 / DSM 30191 / JCM 1249 / CCUG 213 / NBRC 12614 / NCIMB 9131 / NCTC 9757 / MK).